The sequence spans 115 residues: NAD(P)H-quinone oxidoreductase subunit M (115 aa).

It belongs to the complex I NdhM subunit family. NDH-1 can be composed of about 15 different subunits; different subcomplexes with different compositions have been identified which probably have different functions.

It localises to the cellular thylakoid membrane. The enzyme catalyses a plastoquinone + NADH + (n+1) H(+)(in) = a plastoquinol + NAD(+) + n H(+)(out). It carries out the reaction a plastoquinone + NADPH + (n+1) H(+)(in) = a plastoquinol + NADP(+) + n H(+)(out). Its function is as follows. NDH-1 shuttles electrons from an unknown electron donor, via FMN and iron-sulfur (Fe-S) centers, to quinones in the respiratory and/or the photosynthetic chain. The immediate electron acceptor for the enzyme in this species is believed to be plastoquinone. Couples the redox reaction to proton translocation, and thus conserves the redox energy in a proton gradient. Cyanobacterial NDH-1 also plays a role in inorganic carbon-concentration. This is NAD(P)H-quinone oxidoreductase subunit M from Trichodesmium erythraeum (strain IMS101).